Reading from the N-terminus, the 352-residue chain is Molybdenum import ATP-binding protein ModC (352 aa).

The ABC transporter domain maps to 1–229; that stretch reads MLELNFSQTL…SVMNPWLPKE (229 aa). 31-38 is a binding site for ATP; sequence GVSGAGKT. The region spanning 289 to 352 is the Mop domain; that stretch reads QTSIRNVLRA…AQIKSVSITA (64 aa).

This sequence belongs to the ABC transporter superfamily. Molybdate importer (TC 3.A.1.8) family. As to quaternary structure, the complex is composed of two ATP-binding proteins (ModC), two transmembrane proteins (ModB) and a solute-binding protein (ModA).

It is found in the cell inner membrane. The enzyme catalyses molybdate(out) + ATP + H2O = molybdate(in) + ADP + phosphate + H(+). In terms of biological role, part of the ABC transporter complex ModABC involved in molybdenum import. Responsible for energy coupling to the transport system. In Escherichia coli (strain K12), this protein is Molybdenum import ATP-binding protein ModC.